The chain runs to 805 residues: DNA gyrase subunit B (805 aa).

The region spanning 431–546 (CEMYIVEGDS…NECVYIAQPP (116 aa)) is the Toprim domain. Residues Glu-437, Asp-511, and Asp-513 each coordinate Mg(2+).

It belongs to the type II topoisomerase GyrB family. In terms of assembly, heterotetramer, composed of two GyrA and two GyrB chains. In the heterotetramer, GyrA contains the active site tyrosine that forms a transient covalent intermediate with DNA, while GyrB binds cofactors and catalyzes ATP hydrolysis. Requires Mg(2+) as cofactor. It depends on Mn(2+) as a cofactor. The cofactor is Ca(2+).

The protein resides in the cytoplasm. It carries out the reaction ATP-dependent breakage, passage and rejoining of double-stranded DNA.. In terms of biological role, a type II topoisomerase that negatively supercoils closed circular double-stranded (ds) DNA in an ATP-dependent manner to modulate DNA topology and maintain chromosomes in an underwound state. Negative supercoiling favors strand separation, and DNA replication, transcription, recombination and repair, all of which involve strand separation. Also able to catalyze the interconversion of other topological isomers of dsDNA rings, including catenanes and knotted rings. Type II topoisomerases break and join 2 DNA strands simultaneously in an ATP-dependent manner. The protein is DNA gyrase subunit B of Chlamydia pneumoniae (Chlamydophila pneumoniae).